The chain runs to 865 residues: SWI/SNF chromatin-remodeling complex subunit sol1 (865 aa).

4 disordered regions span residues M1–Y34, M54–G92, Q116–E143, and V163–L183. Positions S17–E30 are enriched in polar residues. Positions A121–M139 are enriched in low complexity. One can recognise an ARID domain in the interval A188–L278. The interval Q288 to D380 is disordered. Positions H328–R353 are enriched in polar residues. Pro residues predominate over residues P356–P368. 2 positions are modified to phosphoserine: S852 and S855.

The protein belongs to the SWI1 family. In terms of assembly, component of the SWI/SNF global transcription activator complex composed of at least arp9, arp42, snf5, snf22, snf30, sbf59, sol1, ssr1, ssr2, ssr3, ssr4 and tfg3.

It localises to the nucleus. Component of the SWI/SNF complex, an ATP-dependent chromatin remodeling complex, required for the positive and negative regulation of gene expression of a large number of genes. It changes chromatin structure by altering DNA-histone contacts within a nucleosome, leading eventually to a change in nucleosome position, thus facilitating or repressing binding of gene-specific transcription factors. The protein is SWI/SNF chromatin-remodeling complex subunit sol1 (sol1) of Schizosaccharomyces pombe (strain 972 / ATCC 24843) (Fission yeast).